The sequence spans 408 residues: Acetate kinase (408 aa).

A Mg(2+)-binding site is contributed by N7. K14 provides a ligand contact to ATP. R91 serves as a coordination point for substrate. D148 serves as the catalytic Proton donor/acceptor. ATP is bound by residues 208 to 212 (HLGNG) and 283 to 285 (DLR). E388 lines the Mg(2+) pocket.

The protein belongs to the acetokinase family. In terms of assembly, homodimer. The cofactor is Mg(2+). Mn(2+) is required as a cofactor.

It localises to the cytoplasm. The enzyme catalyses acetate + ATP = acetyl phosphate + ADP. Its pathway is metabolic intermediate biosynthesis; acetyl-CoA biosynthesis; acetyl-CoA from acetate: step 1/2. In terms of biological role, catalyzes the formation of acetyl phosphate from acetate and ATP. Can also catalyze the reverse reaction. This Borrelia hermsii (strain HS1 / DAH) protein is Acetate kinase.